Reading from the N-terminus, the 290-residue chain is MTFQEIIFSLQQFWSSKGCIIGNPYDIEKGAGTFNPNTFLMSLGPEPWNVAYVEPSRRPKDGRYGDNPNRVYQHHQFQVIMKPSPTNIQELYLESLRVLGIEPEKHDIRFVEDDWESPTLGAWGLGWEVWLDGMEITQFTYFQQVGGLELEVIPVEITYGLERLALYIQNKENVYDLEWTKGVKYGDMRYQFEFENSKYSFELATLDKHFKWFDEYEEEAKKILDQGLVLPAYDYVLKCSHAFNVLDSRGAISTTERMGYILRVRNLARRCAEVFVENRKALGYPLLNKK.

This sequence belongs to the class-II aminoacyl-tRNA synthetase family. In terms of assembly, tetramer of two alpha and two beta subunits.

The protein resides in the cytoplasm. The catalysed reaction is tRNA(Gly) + glycine + ATP = glycyl-tRNA(Gly) + AMP + diphosphate. This Fusobacterium nucleatum subsp. nucleatum (strain ATCC 25586 / DSM 15643 / BCRC 10681 / CIP 101130 / JCM 8532 / KCTC 2640 / LMG 13131 / VPI 4355) protein is Glycine--tRNA ligase alpha subunit.